The sequence spans 1063 residues: Structural polyprotein (1063 aa).

The interval 1-131 is disordered; the sequence is MASTTPITME…LGPPTNPFQA (131 aa). A compositionally biased stretch (low complexity) spans 18 to 34; sequence AQSRALRAGLAAGASQS. A human C1QBP/SF2P32-binding region spans residues 30–69; the sequence is GASQSRRPRPPRQRDSSTSGDDSGRDSGGPRRRRGNRGRG. The residue at position 46 (serine 46) is a Phosphoserine; by host. The span at 59-69 shows a compositional bias: basic residues; sequence PRRRRGNRGRG. Positions 70-87 are enriched in basic and acidic residues; sequence QRKDWSRAPPPPEERQES. Over residues 93 to 107 the composition is skewed to pro residues; sequence APKPSRAPPQQPQPP. A disulfide bridge connects residues cysteine 153 and cysteine 197. A functions as E2 signal peptide region spans residues 279–300; sequence GAPQAFLAGLLLAAVAVGTARA. The Extracellular segment spans residues 301–534; sequence GLQPRADMAA…LWLATANALS (234 aa). Residues asparagine 353, asparagine 371, asparagine 410, and asparagine 429 are each glycosylated (N-linked (GlcNAc...) asparagine; by host). Residues 535-555 traverse the membrane as a helical segment; sequence LDHAFAAFVLLVPWVLIFMVC. Residues 556 to 582 are Cytoplasmic-facing; it reads RRACRRRGAAAALTAVVLQGYNPPAYG. A functions as E1 signal peptide region spans residues 563–582; that stretch reads GAAAALTAVVLQGYNPPAYG. The Extracellular segment spans residues 583-1028; sequence EEAFTYLCTA…QTWAEWAAAH (446 aa). Intrachain disulfides connect cysteine 590–cysteine 595, cysteine 619–cysteine 824, cysteine 641–cysteine 653, cysteine 699–cysteine 712, cysteine 758–cysteine 767, cysteine 807–cysteine 817, cysteine 931–cysteine 934, and cysteine 950–cysteine 983. An N-linked (GlcNAc...) asparagine; by host glycan is attached at asparagine 658. The Ca(2+) site is built by asparagine 670 and alanine 671. Ca(2+) is bound by residues aspartate 718 and threonine 719. Residues asparagine 759 and asparagine 791 are each glycosylated (N-linked (GlcNAc...) asparagine; by host). O-linked (GalNAc...) threonine; by host glycosylation is found at threonine 1011 and threonine 1012. Residues 1029-1049 form a helical membrane-spanning segment; the sequence is WWQLTLGAICALLLAGLLACC. Residues 1050–1063 lie on the Cytoplasmic side of the membrane; sequence AKCLYYLRGAIAPR.

Homodimer; further assembles into homooligomer. Interacts with human C1QBP. Interacts (via N-terminus) with protease/methyltransferase p150. In terms of assembly, heterodimer with spike glycoprotein E2. As to quaternary structure, heterodimer with spike glycoprotein E1. In terms of processing, structural polyprotein: Specific enzymatic cleavages in vivo yield mature proteins. Two signal peptidase-mediated cleavages within the polyprotein produce the structural proteins capsid, E2, and E1. The E2 signal peptide remains attached to the C-terminus of the capsid protein after cleavage by the signal peptidase. Another signal peptide at E2 C-terminus directs E1 to the ER, with a similar mechanism. Post-translationally, contains three N-linked oligosaccharides. Capsid is phosphorylated on Ser-46 by host. This phosphorylation negatively regulates capsid protein RNA-binding activity. Dephosphorylated by human PP1A.

Its subcellular location is the virion. It localises to the host cytoplasm. The protein resides in the host mitochondrion. The protein localises to the virion membrane. It is found in the host Golgi apparatus membrane. Capsid protein interacts with genomic RNA and assembles into icosahedric core particles 65-70 nm in diameter. The resulting nucleocapsid eventually associates with the cytoplasmic domain of E2 at the cell membrane, leading to budding and formation of mature virions from host Golgi membranes. Phosphorylation negatively regulates RNA-binding activity, possibly delaying virion assembly during the viral replication phase. Capsid protein dimerizes and becomes disulfide-linked in the virion. Modulates genomic RNA replication. Modulates subgenomic RNA synthesis by interacting with human C1QBP/SF2P32. Induces both perinuclear clustering of mitochondria and the formation of electron-dense intermitochondrial plaques, both hallmarks of rubella virus infected cells. Induces apoptosis when expressed in transfected cells. In terms of biological role, responsible for viral attachment to target host cell, by binding to the cell receptor. Its transport to the plasma membrane depends on interaction with E1 protein. The surface glycoproteins display an irregular helical organization and a pseudo-tetrameric inner nucleocapsid arrangement. Functionally, class II viral fusion protein. Fusion activity is inactive as long as E1 is bound to E2 in mature virion. After virus attachment to target cell and clathrin-mediated endocytosis, acidification of the endosome would induce dissociation of E1/E2 heterodimer and concomitant trimerization of the E1 subunits. This E1 homotrimer is fusion active, and promotes release of viral nucleocapsid in cytoplasm after endosome and viral membrane fusion. The cytoplasmic tail of spike glycoprotein E1 modulates virus release. The surface glycoproteins display an irregular helical organization and a pseudo-tetrameric inner nucleocapsid arrangement. This chain is Structural polyprotein, found in Homo sapiens (Human).